The primary structure comprises 248 residues: tRNA pseudouridine synthase A (248 aa).

The Nucleophile role is filled by aspartate 53. Tyrosine 111 provides a ligand contact to substrate.

It belongs to the tRNA pseudouridine synthase TruA family. As to quaternary structure, homodimer.

It carries out the reaction uridine(38/39/40) in tRNA = pseudouridine(38/39/40) in tRNA. Formation of pseudouridine at positions 38, 39 and 40 in the anticodon stem and loop of transfer RNAs. The protein is tRNA pseudouridine synthase A of Listeria monocytogenes serotype 4b (strain CLIP80459).